The chain runs to 360 residues: Phosphoserine aminotransferase (360 aa).

R42 serves as a coordination point for L-glutamate. Pyridoxal 5'-phosphate is bound by residues 76–77 (AS), W102, T152, D172, and Q195. Residue K196 is modified to N6-(pyridoxal phosphate)lysine. 237–238 (NT) lines the pyridoxal 5'-phosphate pocket.

The protein belongs to the class-V pyridoxal-phosphate-dependent aminotransferase family. SerC subfamily. As to quaternary structure, homodimer. It depends on pyridoxal 5'-phosphate as a cofactor.

It localises to the cytoplasm. It carries out the reaction O-phospho-L-serine + 2-oxoglutarate = 3-phosphooxypyruvate + L-glutamate. The catalysed reaction is 4-(phosphooxy)-L-threonine + 2-oxoglutarate = (R)-3-hydroxy-2-oxo-4-phosphooxybutanoate + L-glutamate. It participates in amino-acid biosynthesis; L-serine biosynthesis; L-serine from 3-phospho-D-glycerate: step 2/3. In terms of biological role, catalyzes the reversible conversion of 3-phosphohydroxypyruvate to phosphoserine and of 3-hydroxy-2-oxo-4-phosphonooxybutanoate to phosphohydroxythreonine. In Bacillus cereus (strain ATCC 10987 / NRS 248), this protein is Phosphoserine aminotransferase.